An 8922-amino-acid chain; its full sequence is Protein clarinet (8922 aa).

The disordered stretch occupies residues 11 to 35; that stretch reads SKGPPLEEVREESEEDAQVPEQVVS. Positions 19–28 are enriched in acidic residues; that stretch reads VREESEEDAQ. The stretch at 385–405 forms a coiled coil; that stretch reads KDETKLILKSVEDKLETTEIE. Disordered regions lie at residues 527 to 579, 622 to 673, 687 to 860, 880 to 955, 971 to 1049, 1062 to 1139, 1151 to 1331, 1347 to 1420, 1444 to 1520, 1538 to 1619, 1632 to 1710, 1726 to 1801, 1820 to 1898, 1939 to 1992, 2032 to 2084, 2126 to 2175, 2194 to 2213, 2220 to 2246, 2329 to 2403, 2423 to 2497, 2516 to 2594, 2610 to 2684, 2704 to 2845, 2892 to 2963, 2983 to 3155, 3171 to 3249, 3268 to 3337, 3619 to 3639, 3995 to 4079, 4117 to 4169, 4181 to 4271, 4557 to 4624, 4636 to 4656, 4666 to 4685, 4730 to 4801, 4855 to 4899, 5004 to 5036, 5360 to 5379, 5390 to 5413, 5484 to 5511, 5540 to 5572, 6194 to 6303, 6354 to 6437, 6487 to 6510, 6577 to 6609, 6668 to 6691, 6728 to 6768, 6998 to 7018, 7045 to 7098, 7137 to 7175, 7202 to 7263, 7313 to 7350, 7598 to 7623, 7760 to 7797, and 7842 to 7881; these read QEAA…EPEL, IVIS…EPEL, LAEK…KEPE, SFEQ…EPEL, EQSS…EPEL, SSAE…MESR, IARI…EPEL, EQSS…VMES, SFEQ…PELT, SFEQ…EEID, SFEQ…LTQE, SFEQ…VPEL, VISE…LTQE, IVIS…SELT, IVIS…SKEP, QSSFEQASTITDRPPLPVRL, IVISEQHEGDRSSATPGADYERSYDQD, SFEQ…KKPE, SFEQ…KPEL, SFEQ…KEPE, SFEQ…ERPF, SFEQ…MESK, SFEQ…PVML, SITPSEGDDGGSSETGHPTTD, AEPV…QEEI, IVIS…PELT, SLAE…STTI, QASA…TQEE, EQSSFEQASTIPDRPPLPVRL, SEQHEGDISSATSGADYERS, EQSS…GVTQ, PANP…PLQD, PEDFSEATSGADTESISETTANKKDSNDSNGLT, LAMFTNPSPSASPSLLRKES, RRSSGADSRASNDSSASRLPDTAL, KKQISSRTESTNSRVSSEGIDEEVENEV, PPIAISHPTPPHSAKTDTGSRHSSGSSAHSQFG, AEPV…ESES, DVES…GSRM, SSKSSTSLGTSAPTKSIPSPQIGI, ARFPPPSSQIPTRSPSVMSSSIMSELPPGLDDL, NAETDSSSSVITSRQPSRSPSVAR, AEFE…VPPG, TERKQREESPTRESGYATSTS, ARSR…DDFD, FDGDESELPHQDFVFNEPTTKKTSDFDFPKETDEVFEKP, EAPS…YPDR, KTTTSQTPSTSTKPTVTAPKRSDPIPIAPSQRSKEIEE, DSVRDDNERNENETTSPRGLKRSPGM, TRRHQHQQQHQAPVYITSSASRPPSAAGSNIFQESRPT, and HIRQPVSVRSPRAQTGTTQTTAASGSASNSIRPSIGSSSV. A compositionally biased stretch (basic and acidic residues) spans 531 to 552; the sequence is SDNHEKERSSATSKADYERSFD. Residues 760-776 are compositionally biased toward basic and acidic residues; the sequence is MESKEPELTQEEIDHIA. A compositionally biased stretch (low complexity) spans 1062 to 1076; sequence SSAEQSSFEQASTVP. Residues 1230–1244 show a composition bias toward basic and acidic residues; the sequence is MESKEPELTQEEIDH. Positions 1251–1261 are enriched in polar residues; it reads IAEQSSFEQAS. 2 stretches are compositionally biased toward basic and acidic residues: residues 1606–1619 and 1700–1710; these read MESKEPELTQEEID and MESKEPELTQE. Basic and acidic residues-rich tracts occupy residues 1888–1898 and 1982–1992; these read MESKEPELTQE and MESKESELTQE. Residues 2194 to 2204 show a composition bias toward polar residues; it reads QSSFEQASTIT. The segment covering 2584–2594 has biased composition (basic and acidic residues); the sequence is MESKEPELTQE. Basic and acidic residues predominate over residues 2772 to 2788; it reads MESKEPELTQEEIDHIA. A compositionally biased stretch (polar residues) spans 2793-2803; it reads LAEQSSFEQAS. Positions 3076 to 3085 are enriched in polar residues; sequence APSSSFEQAS. Over residues 4035 to 4044 the composition is skewed to polar residues; it reads GTSFPDNAET. Positions 4065 to 4079 are enriched in basic and acidic residues; it reads PVMKSKEPELTQEEI. Composition is skewed to polar residues over residues 4182–4195, 4223–4234, and 4255–4271; these read LAEQSSFEQTSTIP, SATSGADYQQSF, and MESTQPELTQDHSSTTI. Residues 4571–4580 are compositionally biased toward basic and acidic residues; the sequence is IVEKREDDKS. The span at 4581–4594 shows a compositional bias: polar residues; sequence NITSGADYQQSFDQ. Residues 4613 to 4624 show a composition bias toward basic and acidic residues; sequence MESKEPELTQEE. Residues 4636–4645 show a composition bias toward polar residues; sequence EQSSFEQAST. Residues 4730–4739 show a composition bias toward polar residues; it reads EQSSFEQAST. Low complexity predominate over residues 4871 to 4890; that stretch reads EGSSSATSGADIPSSFDISS. A compositionally biased stretch (polar residues) spans 5009–5023; the sequence is EATSGADTESISETT. Positions 5390-5407 are enriched in low complexity; the sequence is RRSSGADSRASNDSSASR. The segment covering 5486 to 5499 has biased composition (polar residues); the sequence is QISSRTESTNSRVS. Positions 5540 to 5550 are enriched in pro residues; that stretch reads PPIAISHPTPP. Residues 5560 to 5572 show a composition bias toward low complexity; it reads RHSSGSSAHSQFG. Composition is skewed to polar residues over residues 6225–6245 and 6270–6284; these read ASSGASGSFDNNNAQVLTSGF and KTVSPTPSADSMASR. Basic and acidic residues-rich tracts occupy residues 6285–6303 and 6376–6422; these read KSSEYDIRSISEIRQESES and GEGE…EESL. Residues 6494 to 6505 are compositionally biased toward polar residues; the sequence is LGTSAPTKSIPS. Residues 6590–6600 show a composition bias toward low complexity; it reads SPSVMSSSIMS. Polar residues predominate over residues 6670-6687; it reads ETDSSSSVITSRQPSRSP. The segment covering 6735–6747 has biased composition (low complexity); that stretch reads SQVPSRQPSRSPS. 2 stretches are compositionally biased toward basic and acidic residues: residues 6998–7008 and 7045–7069; these read TERKQREESPT and ARSRRDSRDEVLHRREEDPEVHTPE. A compositionally biased stretch (low complexity) spans 7071 to 7086; it reads SSTAVVTDVPSVSPVT. A compositionally biased stretch (basic and acidic residues) spans 7155–7175; that stretch reads TTKKTSDFDFPKETDEVFEKP. Residues 7248–7260 are compositionally biased toward acidic residues; the sequence is SDEESCSEDDEEY. The segment covering 7313 to 7331 has biased composition (low complexity); that stretch reads KTTTSQTPSTSTKPTVTAP. The span at 7599–7609 shows a compositional bias: basic and acidic residues; that stretch reads SVRDDNERNEN. Composition is skewed to low complexity over residues 7777-7788 and 7854-7880; these read SSASRPPSAAGS and AQTGTTQTTAASGSASNSIRPSIGSSS. A coiled-coil region spans residues 7895 to 7915; sequence KKELKDVLIQRKQRLEATEIE. The interval 8510–8562 is disordered; that stretch reads SRRRAQETALTSSNKISTGSRSYARRPIRPSSYRNPEATNSMPDRHVARRTAE. 2 stretches are compositionally biased toward polar residues: residues 8517–8530 and 8541–8551; these read TALTSSNKISTGSR and SYRNPEATNSM. Positions 8552-8562 are enriched in basic and acidic residues; the sequence is PDRHVARRTAE. Positions 8570–8661 constitute a PDZ domain; the sequence is RILLTRSYKH…EIEMVIRTYK (92 aa). Residues 8714-8835 form the C2 domain; sequence CHGHIQVSLG…SAINTGPRWY (122 aa).

Expressed in the nervous system.

It localises to the synapse. Its subcellular location is the cell projection. The protein localises to the axon. In terms of biological role, required for synapse development in the active zone of presynaptic terminals of specific neurons including serotonergic NSM neurons. The active zone is a protein-dense neuronal region within the presynaptic bouton, from which synaptic vesicles send neurotransmitter signals across the synapse. Plays a role in the recruitment and clustering of synaptic vesicles in the active zone of presynaptic terminals in serotonergic NSM neurons, and coordinates the release of synaptic vesicles at presynaptic terminals to regulate neurotransmission at neuromuscular junctions. Regulates synapse number in inhibitory motor neurons and plays a role in spontaneous postsynaptic synaptic vesicle release in muscle cells. The polypeptide is Protein clarinet (Caenorhabditis elegans).